The chain runs to 375 residues: POU domain, class 3, transcription factor 1 (375 aa).

Disordered stretches follow at residues 1-29, 56-139, and 151-200; these read MAATAQYLPRNNSLPSNPLMHPDSDRMHQ, MSLT…QPLI, and MLGP…PSSD. Composition is skewed to polar residues over residues 107-117, 130-139, and 151-160; these read VHQQTPSSHAW, PGSNSHQPLI, and MLGPQASSLH. Over residues 162–171 the composition is skewed to basic and acidic residues; that stretch reads SMRDPLHDDP. The region spanning 194-268 is the POU-specific domain; the sequence is EDAPSSDDLE…LLNKWLEETD (75 aa). Residues 286–345 constitute a DNA-binding region (homeobox); sequence KRKKRTSIEVGVKGALENHFLKCPKPSAHEITSLADSLQLEKEVVRVWFCNRRQKEKRMT.

This sequence belongs to the POU transcription factor family. Class-3 subfamily.

The protein resides in the nucleus. Its function is as follows. Acts as a transcription factor. May play a role in neuronal differentiation. The polypeptide is POU domain, class 3, transcription factor 1 (Xenopus tropicalis (Western clawed frog)).